We begin with the raw amino-acid sequence, 306 residues long: Agmatinase (306 aa).

Mn(2+) is bound by residues His-126, Asp-149, His-151, Asp-153, Asp-230, and Asp-232.

It belongs to the arginase family. Agmatinase subfamily. The cofactor is Mn(2+).

The catalysed reaction is agmatine + H2O = urea + putrescine. Its pathway is amine and polyamine biosynthesis; putrescine biosynthesis via agmatine pathway; putrescine from agmatine: step 1/1. Catalyzes the formation of putrescine from agmatine. This chain is Agmatinase, found in Shigella dysenteriae serotype 1 (strain Sd197).